The chain runs to 456 residues: tRNA-2-methylthio-N(6)-dimethylallyladenosine synthase (456 aa).

Residues 1–116 (MTYFFETYGC…FESIFQEIEQ (116 aa)) form the MTTase N-terminal domain. Residues C10, C46, C79, C162, C166, and C169 each coordinate [4Fe-4S] cluster. One can recognise a Radical SAM core domain in the interval 148–384 (SEGSFQSFIP…IALQMSTTLK (237 aa)). Positions 387–452 (RARVGKTLPV…GRTLRAHLVQ (66 aa)) constitute a TRAM domain.

It belongs to the methylthiotransferase family. MiaB subfamily. In terms of assembly, monomer. It depends on [4Fe-4S] cluster as a cofactor.

The protein localises to the cytoplasm. The catalysed reaction is N(6)-dimethylallyladenosine(37) in tRNA + (sulfur carrier)-SH + AH2 + 2 S-adenosyl-L-methionine = 2-methylsulfanyl-N(6)-dimethylallyladenosine(37) in tRNA + (sulfur carrier)-H + 5'-deoxyadenosine + L-methionine + A + S-adenosyl-L-homocysteine + 2 H(+). Functionally, catalyzes the methylthiolation of N6-(dimethylallyl)adenosine (i(6)A), leading to the formation of 2-methylthio-N6-(dimethylallyl)adenosine (ms(2)i(6)A) at position 37 in tRNAs that read codons beginning with uridine. This chain is tRNA-2-methylthio-N(6)-dimethylallyladenosine synthase, found in Treponema pallidum (strain Nichols).